Here is a 460-residue protein sequence, read N- to C-terminus: Cysteine--tRNA ligase (460 aa).

Cysteine 28 is a Zn(2+) binding site. The 'HIGH' region motif lies at 30–40 (MTVYDYCHLGH). Residues cysteine 209, histidine 234, and glutamate 238 each contribute to the Zn(2+) site. Positions 266–270 (KMSKS) match the 'KMSKS' region motif. Position 269 (lysine 269) interacts with ATP.

It belongs to the class-I aminoacyl-tRNA synthetase family. Monomer. It depends on Zn(2+) as a cofactor.

The protein resides in the cytoplasm. The enzyme catalyses tRNA(Cys) + L-cysteine + ATP = L-cysteinyl-tRNA(Cys) + AMP + diphosphate. This is Cysteine--tRNA ligase from Pseudomonas syringae pv. syringae (strain B728a).